The chain runs to 90 residues: Small ribosomal subunit protein bS16 (90 aa).

This sequence belongs to the bacterial ribosomal protein bS16 family.

The chain is Small ribosomal subunit protein bS16 from Listeria monocytogenes serotype 4b (strain F2365).